The sequence spans 200 residues: Transgelin (200 aa).

The residue at position 2 (Ser-2) is an N-acetylserine. Ser-11 carries the phosphoserine modification. Positions Pro-26–Ala-136 constitute a Calponin-homology (CH) domain. The segment at Phe-144–Gln-168 is disordered. The segment at Leu-151–Pro-164 is interaction with SH3 domain of ABP1. Residues Lys-154–Lys-165 show a composition bias toward basic residues.

In terms of assembly, binds to actin. Interacts with ABP1.

The protein localises to the cytoplasm. It localises to the cytoskeleton. Its subcellular location is the actin patch. Functionally, has actin-binding and actin-bundling activity. Stabilizes actin filaments against disassembly. In Saccharomyces cerevisiae (strain ATCC 204508 / S288c) (Baker's yeast), this protein is Transgelin (SCP1).